We begin with the raw amino-acid sequence, 157 residues long: MQCPSCQNTDSRVLESRSADTGKSVRRRRECLNCDFRFTTYERVETVPITVIKRSESKETFSRSKLLNGLIRACEKTCIDNQKIESIVDEIEIQLQQRNMKEVSSSDLGEMVLGQLKGLSEVAYIRFASVYRQFNGINDFVETLETFKPDKKLATVI.

A compositionally biased stretch (polar residues) spans 1–11 (MQCPSCQNTDS). Positions 1 to 21 (MQCPSCQNTDSRVLESRSADT) are disordered. The segment at 3–34 (CPSCQNTDSRVLESRSADTGKSVRRRRECLNC) is a zinc-finger region. The ATP-cone domain occupies 49–139 (ITVIKRSESK…VYRQFNGIND (91 aa)).

It belongs to the NrdR family. Zn(2+) serves as cofactor.

Its function is as follows. Negatively regulates transcription of bacterial ribonucleotide reductase nrd genes and operons by binding to NrdR-boxes. The chain is Transcriptional repressor NrdR from Prochlorococcus marinus (strain MIT 9211).